Reading from the N-terminus, the 529-residue chain is Putative inorganic phosphate cotransporter (529 aa).

Helical transmembrane passes span 37 to 57 (FATR…AYVM), 110 to 130 (YILS…GILA), 148 to 168 (VFAF…LCAV), 202 to 222 (AVYA…GLLA), 232 to 252 (SIFY…LIFV), 338 to 358 (LPYL…DWMI), 429 to 449 (FLMS…PIAA), and 466 to 486 (IVFF…NIFG). Positions 495-529 (NPEDDEQKPALQTTVTTSPARLSNGSTAPAAISSS) are disordered. The span at 504 to 529 (ALQTTVTTSPARLSNGSTAPAAISSS) shows a compositional bias: polar residues.

The protein belongs to the major facilitator superfamily. Sodium/anion cotransporter family.

Its subcellular location is the membrane. May be an inorganic phosphate cotransporter. The sequence is that of Putative inorganic phosphate cotransporter (Picot) from Drosophila melanogaster (Fruit fly).